A 208-amino-acid polypeptide reads, in one-letter code: Protein GrpE (208 aa).

The span at 1–25 shows a compositional bias: basic and acidic residues; sequence MVDNKDFNEELKESIQEELDNETKS. The tract at residues 1–38 is disordered; sequence MVDNKDFNEELKESIQEELDNETKSENPNIDEEVEEVS. Positions 29 to 38 are enriched in acidic residues; the sequence is NIDEEVEEVS.

This sequence belongs to the GrpE family. In terms of assembly, homodimer.

Its subcellular location is the cytoplasm. Participates actively in the response to hyperosmotic and heat shock by preventing the aggregation of stress-denatured proteins, in association with DnaK and GrpE. It is the nucleotide exchange factor for DnaK and may function as a thermosensor. Unfolded proteins bind initially to DnaJ; upon interaction with the DnaJ-bound protein, DnaK hydrolyzes its bound ATP, resulting in the formation of a stable complex. GrpE releases ADP from DnaK; ATP binding to DnaK triggers the release of the substrate protein, thus completing the reaction cycle. Several rounds of ATP-dependent interactions between DnaJ, DnaK and GrpE are required for fully efficient folding. In Clostridium perfringens (strain SM101 / Type A), this protein is Protein GrpE.